A 143-amino-acid polypeptide reads, in one-letter code: Transcriptional regulator MraZ (143 aa).

2 consecutive SpoVT-AbrB domains span residues 5–47 and 76–119; these read EYLH…PLDE and ATEC…SQAL.

The protein belongs to the MraZ family. In terms of assembly, forms oligomers.

Its subcellular location is the cytoplasm. The protein resides in the nucleoid. This chain is Transcriptional regulator MraZ, found in Desulfitobacterium hafniense (strain Y51).